The sequence spans 929 residues: Formin-like protein 11 (929 aa).

The N-terminal stretch at 1-28 is a signal peptide; it reads MMRHCRREWLLALCLISVQLLIPTGCEG. The tract at residues 153–215 is disordered; sequence ESSTTKSIPE…KSVAEKKKDS (63 aa). Residues 171-189 show a composition bias toward polar residues; that stretch reads KTSTPKPVNKPTDSVSSPP. The span at 191 to 215 shows a compositional bias: basic and acidic residues; it reads RSYKSAPTEKENPPTKSVAEKKKDS. The chain crosses the membrane as a helical span at residues 222 to 242; it reads FIGLSIAGIALMAHLCLCCFM. Disordered regions lie at residues 372–472 and 726–749; these read PVGS…ENSN and AAKE…SEQT. The segment covering 382–447 has biased composition (pro residues); the sequence is MQPPVMPPPI…GPPRPPPPAM (66 aa). One can recognise an FH2 domain in the interval 468–898; the sequence is VENSNEAKTK…KAKAKQPSQS (431 aa). Residues 738-749 are compositionally biased toward basic and acidic residues; sequence KTDDLGDKSEQT.

This sequence belongs to the formin-like family. Class-I subfamily.

The protein localises to the membrane. The chain is Formin-like protein 11 (FH11) from Oryza sativa subsp. japonica (Rice).